The chain runs to 256 residues: H-2 class II histocompatibility antigen, A-D alpha chain (256 aa).

The N-terminal stretch at 1–23 (MPCSRALILGVLALNTMLSLCGG) is a signal peptide. The interval 24–111 (EDDIEADHVG…KRSNFTPATN (88 aa)) is alpha-1. Residues 24-218 (EDDIEADHVG…IPAPMSELTE (195 aa)) lie on the Extracellular side of the membrane. The tract at residues 112–205 (EAPQATVFPK…GLEEPVLKHW (94 aa)) is alpha-2. In terms of domain architecture, Ig-like C1-type spans 114 to 206 (PQATVFPKSP…LEEPVLKHWE (93 aa)). Residues C134 and C190 are joined by a disulfide bond. The N-linked (GlcNAc...) asparagine glycan is linked to N145. The segment at 206–218 (EPEIPAPMSELTE) is connecting peptide. The helical transmembrane segment at 219–244 (TVVCALGLSVGLVGIVVGTIFIIQGL) threads the bilayer. Over 245–256 (RSGGTSRHPGPL) the chain is Cytoplasmic.

The protein belongs to the MHC class II family.

It localises to the membrane. The sequence is that of H-2 class II histocompatibility antigen, A-D alpha chain (H2-Aa) from Mus musculus (Mouse).